The following is a 283-amino-acid chain: Dihydropteroate synthase (283 aa).

A Pterin-binding domain is found at 18-274; that stretch reads PKIMGIVNLT…DVKATADALK (257 aa). Asn25 lines the Mg(2+) pocket. (7,8-dihydropterin-6-yl)methyl diphosphate contacts are provided by residues Thr66, Asp99, Asn119, Asp190, Lys227, and 262 to 264; that span reads RVH.

Belongs to the DHPS family. Homodimer. It depends on Mg(2+) as a cofactor.

It carries out the reaction (7,8-dihydropterin-6-yl)methyl diphosphate + 4-aminobenzoate = 7,8-dihydropteroate + diphosphate. It participates in cofactor biosynthesis; tetrahydrofolate biosynthesis; 7,8-dihydrofolate from 2-amino-4-hydroxy-6-hydroxymethyl-7,8-dihydropteridine diphosphate and 4-aminobenzoate: step 1/2. Functionally, catalyzes the condensation of para-aminobenzoate (pABA) with 6-hydroxymethyl-7,8-dihydropterin diphosphate (DHPt-PP) to form 7,8-dihydropteroate (H2Pte), the immediate precursor of folate derivatives. The chain is Dihydropteroate synthase (folP) from Neisseria meningitidis serogroup C.